Here is a 422-residue protein sequence, read N- to C-terminus: Tyrosine--tRNA ligase (422 aa).

Residue tyrosine 37 participates in L-tyrosine binding. The 'HIGH' region signature appears at proline 42 to histidine 51. Positions 175 and 179 each coordinate L-tyrosine. Residues lysine 235–threonine 239 carry the 'KMSKS' region motif. Lysine 238 is an ATP binding site. Residues lysine 357 to lysine 414 enclose the S4 RNA-binding domain.

This sequence belongs to the class-I aminoacyl-tRNA synthetase family. TyrS type 1 subfamily. Homodimer.

It is found in the cytoplasm. It catalyses the reaction tRNA(Tyr) + L-tyrosine + ATP = L-tyrosyl-tRNA(Tyr) + AMP + diphosphate + H(+). Its function is as follows. Catalyzes the attachment of tyrosine to tRNA(Tyr) in a two-step reaction: tyrosine is first activated by ATP to form Tyr-AMP and then transferred to the acceptor end of tRNA(Tyr). The protein is Tyrosine--tRNA ligase of Buchnera aphidicola subsp. Acyrthosiphon pisum (strain 5A).